The sequence spans 95 residues: Endoribonuclease VapD homolog (95 aa).

It belongs to the VapD ribonuclease family. Homodimer.

In terms of biological role, cleaves ssRNA, mostly between U:A. This chain is Endoribonuclease VapD homolog, found in Helicobacter pylori (strain ATCC 700392 / 26695) (Campylobacter pylori).